Here is a 190-residue protein sequence, read N- to C-terminus: Selenoprotein S (190 aa).

The chain crosses the membrane as a helical span at residues 28–48 (SLLATYGWYIVFCCILLYVVF). A VCP/p97-interacting motif (VIM) region spans residues 78–90 (RQEALAAARLKMQ). The span at 115–138 (KIERWDSVQEGRSYRGDARKRQEE) shows a compositional bias: basic and acidic residues. The interval 115 to 190 (KIERWDSVQE…RRGPSSGGUG (76 aa)) is disordered. Serine 140 is subject to Phosphoserine. Over residues 160–174 (RGGGYNPLSGEGGGA) the composition is skewed to gly residues. Residue selenocysteine 189 is a non-standard amino acid, selenocysteine.

This sequence belongs to the selenoprotein S family. As to quaternary structure, interacts with DERL1 and (via VIM motif) with VCP, suggesting that it forms a membrane complex with DERL1 that serves as a receptor for VCP. Also interacts with DERL2, DERL3 and SELENOK. The SELENOK-SELENOS complex interacts with VCP. In terms of processing, truncated SELENOS proteins produced by failed UGA/Sec decoding are ubiquitinated by the CRL2(KLHDC2) and CRL2(KLHDC3) complexes, which recognizes the glycine (Gly) at the C-terminus of truncated SELENOS proteins. Truncated SELENOS proteins produced by failed UGA/Sec decoding are also ubiquitinated by the CRL5(KLHDC1) complex. Ubiquitously expressed. Highest expression in liver and lung, with lower levels detected in spleen, kidney, brain, lymph nodes, small intestine, stomach and heart. Very low expression detected in longissimus dorsi.

Its subcellular location is the cytoplasm. It localises to the endoplasmic reticulum membrane. Functionally, involved in the degradation process of misfolded endoplasmic reticulum (ER) luminal proteins. Participates in the transfer of misfolded proteins from the ER to the cytosol, where they are destroyed by the proteasome in a ubiquitin-dependent manner. Probably acts by serving as a linker between DERL1, which mediates the retrotranslocation of misfolded proteins into the cytosol, and the ATPase complex VCP, which mediates the translocation and ubiquitination. The protein is Selenoprotein S of Sus scrofa (Pig).